A 159-amino-acid chain; its full sequence is Succinate dehydrogenase [ubiquinone] cytochrome b small subunit, mitochondrial (159 aa).

The transit peptide at 1 to 56 (MAVLLKLGVLCSGQGARALSLRSRAVRPAFVSAFLQDQPTPGWRGTQHIHLSPSHQ) directs the protein to the mitochondrion. Residues 57–63 (SGSKAAS) lie on the Mitochondrial matrix side of the membrane. The chain crosses the membrane as a helical span at residues 64–85 (LHWTSERVVSVLLLGLIPAGYL). Topologically, residues 86–90 (NPCSV) are mitochondrial intermembrane. A helical membrane pass occupies residues 91 to 111 (VDYSLAAALTLHSHWGIGQVV). His-102 contributes to the heme b binding site. The Mitochondrial matrix portion of the chain corresponds to 112 to 120 (TDYVHGDAL). Tyr-114 is a binding site for a ubiquinone. The chain crosses the membrane as a helical span at residues 121-142 (QKATKAGLLAVSALTFAGLCYF). The Mitochondrial intermembrane portion of the chain corresponds to 143–159 (NYHDVGICRAVAMLWKL).

It belongs to the CybS family. In terms of assembly, component of complex II composed of four subunits: the flavoprotein (FP) SDHA, iron-sulfur protein (IP) SDHB, and a cytochrome b560 composed of SDHC and SDHD.

The protein localises to the mitochondrion inner membrane. It participates in carbohydrate metabolism; tricarboxylic acid cycle. Membrane-anchoring subunit of succinate dehydrogenase (SDH) that is involved in complex II of the mitochondrial electron transport chain and is responsible for transferring electrons from succinate to ubiquinone (coenzyme Q). SDH also oxidizes malate to the non-canonical enol form of oxaloacetate, enol-oxaloacetate. Enol-oxaloacetate, which is a potent inhibitor of the succinate dehydrogenase activity, is further isomerized into keto-oxaloacetate. The chain is Succinate dehydrogenase [ubiquinone] cytochrome b small subunit, mitochondrial (Sdhd) from Rattus norvegicus (Rat).